Consider the following 299-residue polypeptide: Probable lipid kinase YegS-like (299 aa).

In terms of domain architecture, DAGKc spans 2–133; it reads EKNPITLLIL…IDIAKVNDGH (132 aa). Residues T40, 66 to 72, and T95 each bind ATP; that span reads GDGTVNE. Residues L215, D218, and L220 each contribute to the Mg(2+) site. Catalysis depends on E271, which acts as the Proton acceptor.

Belongs to the diacylglycerol/lipid kinase family. YegS lipid kinase subfamily. Mg(2+) serves as cofactor. Ca(2+) is required as a cofactor.

Its subcellular location is the cytoplasm. Probably phosphorylates lipids; the in vivo substrate is unknown. This chain is Probable lipid kinase YegS-like, found in Pectobacterium atrosepticum (strain SCRI 1043 / ATCC BAA-672) (Erwinia carotovora subsp. atroseptica).